A 304-amino-acid polypeptide reads, in one-letter code: Undecaprenyl-diphosphatase (304 aa).

A run of 8 helical transmembrane segments spans residues 5–25 (FLFILKALIIAIVEGLTEFVP), 47–67 (GFPEMYEVVIQLGAILAVVVL), 72–92 (ISSSVVEFLSYIFSFIGLKTS), 111–131 (FGINVIIGTIPAAILGLLFHD), 137–157 (LFSTKTVAIGFIVGGILLIVI), 209–231 (ISGLSTTVATEFTFFLAIPAMVG), 248–268 (TNWISLILGFIVAFIVSLVVI), and 283–303 (FAIYRVFAGIVLAILIFTKVI).

The protein belongs to the UppP family.

It is found in the cell membrane. The catalysed reaction is di-trans,octa-cis-undecaprenyl diphosphate + H2O = di-trans,octa-cis-undecaprenyl phosphate + phosphate + H(+). Functionally, catalyzes the dephosphorylation of undecaprenyl diphosphate (UPP). Confers resistance to bacitracin. The protein is Undecaprenyl-diphosphatase of Clostridium perfringens (strain 13 / Type A).